The following is a 282-amino-acid chain: Transcription factor BC1 (282 aa).

The segment at 34–123 (TTAPAIPEDA…ATDSHSLAER (90 aa)) is disordered. Residues 45–55 (METSSVVLDTS) are compositionally biased toward polar residues. A compositionally biased stretch (basic and acidic residues) spans 75–84 (HSKEAKENGR). The short motif at 109 to 116 (ARRGQATD) is the Nuclear localization signal element. Positions 113 to 126 (QATDSHSLAERVRR) are basic motif; degenerate. A bHLH domain is found at 113-163 (QATDSHSLAERVRRERISERMRMLQALVPGCDKVTGKALILDEIINYVQSL). The tract at residues 127–163 (ERISERMRMLQALVPGCDKVTGKALILDEIINYVQSL) is helix-loop-helix motif. The tract at residues 219 to 251 (PAQSHAIMDTSNTSPTPYTLQVQGGSNNNSLSQ) is disordered.

Belongs to the bHLH protein family. As to quaternary structure, homodimer. Component of a nuclear cell elongation controlling complex made of ILI5/BUL1, LO9-177 and BC1. Interacts with ILI5/BUL1 only in the presence of LO9-177. Interacts with IBH1. Binds to LO9-177 in the nucleus. Interacts with BCL1. In terms of tissue distribution, preferentially present in anthers and leaves lamina joints. Expressed in seedlings, leaves sheaths, collars and panicles.

Its subcellular location is the nucleus. In terms of biological role, transcription activator that contributes, together with LO9-177 and ILI5/BUL1, to the promotion of leaf inclination and grain size by modulating cell elongation. Involved in the RLI1-dependent modulation of leaf inclination by promoting lamina joint cell elongation, especially in response to phosphate (Pi) availability. In Oryza sativa subsp. japonica (Rice), this protein is Transcription factor BC1.